The chain runs to 661 residues: Hemocyanin C chain (661 aa).

The cysteines at positions 3 and 557 are disulfide-linked. Histidine 200, histidine 204, histidine 230, histidine 350, histidine 354, and histidine 390 together coordinate Cu cation. Asparagine 476 carries N-linked (GlcNAc...) asparagine glycosylation.

The protein belongs to the tyrosinase family. Hemocyanin subfamily. As to quaternary structure, hexamer of a number of different chains, of which A, B, and C have been identified. In terms of tissue distribution, hemolymph.

The protein localises to the secreted. It is found in the extracellular space. Functionally, hemocyanins are copper-containing oxygen carriers occurring freely dissolved in the hemolymph of many mollusks and arthropods. The protein is Hemocyanin C chain of Panulirus interruptus (California spiny lobster).